Consider the following 320-residue polypeptide: ATP-dependent 6-phosphofructokinase (320 aa).

Residue Gly12 participates in ATP binding. Residue 22–26 participates in ADP binding; sequence RGVVR. ATP-binding positions include 73 to 74 and 103 to 106; these read RF and GDGS. Asp104 provides a ligand contact to Mg(2+). 126–128 is a substrate binding site; that stretch reads TID. The Proton acceptor role is filled by Asp128. ADP is bound at residue Arg155. Substrate-binding positions include Arg163 and 170–172; that span reads MGR. ADP-binding positions include 186–188, Lys212, and 214–216; these read GCE and KKH. Substrate-binding positions include Glu223, Arg244, and 250-253; that span reads HIQR.

The protein belongs to the phosphofructokinase type A (PFKA) family. ATP-dependent PFK group I subfamily. Prokaryotic clade 'B1' sub-subfamily. In terms of assembly, homotetramer. Mg(2+) is required as a cofactor.

The protein localises to the cytoplasm. It catalyses the reaction beta-D-fructose 6-phosphate + ATP = beta-D-fructose 1,6-bisphosphate + ADP + H(+). It functions in the pathway carbohydrate degradation; glycolysis; D-glyceraldehyde 3-phosphate and glycerone phosphate from D-glucose: step 3/4. Its activity is regulated as follows. Allosterically activated by ADP and other diphosphonucleosides, and allosterically inhibited by phosphoenolpyruvate. Its function is as follows. Catalyzes the phosphorylation of D-fructose 6-phosphate to fructose 1,6-bisphosphate by ATP, the first committing step of glycolysis. In Vibrio cholerae serotype O1 (strain ATCC 39315 / El Tor Inaba N16961), this protein is ATP-dependent 6-phosphofructokinase.